The following is a 1165-amino-acid chain: DNA-directed RNA polymerase subunit beta (1165 aa).

This sequence belongs to the RNA polymerase beta chain family. In terms of assembly, the RNAP catalytic core consists of 2 alpha, 1 beta, 1 beta' and 1 omega subunit. When a sigma factor is associated with the core the holoenzyme is formed, which can initiate transcription.

The catalysed reaction is RNA(n) + a ribonucleoside 5'-triphosphate = RNA(n+1) + diphosphate. Its function is as follows. DNA-dependent RNA polymerase catalyzes the transcription of DNA into RNA using the four ribonucleoside triphosphates as substrates. The protein is DNA-directed RNA polymerase subunit beta of Corynebacterium glutamicum (strain R).